The sequence spans 148 residues: Endothelial differentiation-related factor 1 (148 aa).

Alanine 2 carries the post-translational modification N-acetylalanine. Serine 4 is modified (phosphoserine). Residue lysine 25 is modified to N6-methyllysine. Residues 34-67 are disordered; it reads RGEDVETSKKWAAGQNKQHSITKNTAKLDRETEE. An interaction with NR5A2, PPARG and NR1H3 region spans residues 37-113; sequence DVETSKKWAA…QVIADYESGR (77 aa). A compositionally biased stretch (polar residues) spans 48 to 58; the sequence is QNKQHSITKNT. The interaction with TBP and NR5A1 stretch occupies residues 69-108; that stretch reads HHDRVTLEVGKVIQRGRQSKGLTQKDLATKINEKPQVIAD. The short motif at 81–88 is the IQ motif element; the sequence is IQRGRQSK. An HTH cro/C1-type domain is found at 81-135; that stretch reads IQRGRQSKGLTQKDLATKINEKPQVIADYESGRAIPNNQVLGKIERAIGLKLRGK. Positions 92-111 form a DNA-binding region, H-T-H motif; that stretch reads QKDLATKINEKPQVIADYES.

In terms of assembly, interacts with TBP and the transcription factor IID (TFIID) complex, NR5A2, NR1H3 and PPARG. Interaction with TBP is regulated by phosphorylation. Binds NR5A1, ATF1, FOS and JUN via their conserved basic region. Binding to calmodulin is regulated by calcium and phosphorylation of the IQ motif. In terms of processing, phosphorylated. As to expression, expressed in brain, liver, kidney and heart (at protein level). Also expressed in testis.

Its subcellular location is the cytoplasm. The protein resides in the nucleus. In terms of biological role, transcriptional coactivator stimulating NR5A1 and ligand-dependent NR1H3/LXRA and PPARG transcriptional activities. Enhances the DNA-binding activity of ATF1, ATF2, CREB1 and NR5A1. Regulates nitric oxid synthase activity probably by sequestering calmodulin in the cytoplasm. Might function in endothelial cells differentiation, hormone-induced cardiomyocytes hypertrophy and lipid metabolism. The chain is Endothelial differentiation-related factor 1 (Edf1) from Mus musculus (Mouse).